We begin with the raw amino-acid sequence, 209 residues long: FMN-dependent NADH:quinone oxidoreductase (209 aa).

FMN-binding positions include S9 and 15–17 (SNS).

Belongs to the azoreductase type 1 family. As to quaternary structure, homodimer. The cofactor is FMN.

It catalyses the reaction 2 a quinone + NADH + H(+) = 2 a 1,4-benzosemiquinone + NAD(+). It carries out the reaction N,N-dimethyl-1,4-phenylenediamine + anthranilate + 2 NAD(+) = 2-(4-dimethylaminophenyl)diazenylbenzoate + 2 NADH + 2 H(+). In terms of biological role, quinone reductase that provides resistance to thiol-specific stress caused by electrophilic quinones. Its function is as follows. Also exhibits azoreductase activity. Catalyzes the reductive cleavage of the azo bond in aromatic azo compounds to the corresponding amines. The chain is FMN-dependent NADH:quinone oxidoreductase from Bordetella parapertussis (strain 12822 / ATCC BAA-587 / NCTC 13253).